The primary structure comprises 428 residues: Enolase (428 aa).

Position 163 (Q163) interacts with (2R)-2-phosphoglycerate. E205 acts as the Proton donor in catalysis. The Mg(2+) site is built by D242, E285, and D312. Positions 337, 366, 367, and 388 each coordinate (2R)-2-phosphoglycerate. K337 (proton acceptor) is an active-site residue.

This sequence belongs to the enolase family. It depends on Mg(2+) as a cofactor.

The protein localises to the cytoplasm. It is found in the secreted. Its subcellular location is the cell surface. It catalyses the reaction (2R)-2-phosphoglycerate = phosphoenolpyruvate + H2O. It functions in the pathway carbohydrate degradation; glycolysis; pyruvate from D-glyceraldehyde 3-phosphate: step 4/5. Functionally, catalyzes the reversible conversion of 2-phosphoglycerate (2-PG) into phosphoenolpyruvate (PEP). It is essential for the degradation of carbohydrates via glycolysis. The chain is Enolase from Nitrosomonas eutropha (strain DSM 101675 / C91 / Nm57).